Reading from the N-terminus, the 478-residue chain is Glutamate--tRNA ligase 1 (478 aa).

The 'HIGH' region motif lies at 10 to 20 (PSPTGFLHIGG). The 'KMSKS' region signature appears at 242–246 (KLSKR). Lysine 245 contributes to the ATP binding site.

This sequence belongs to the class-I aminoacyl-tRNA synthetase family. Glutamate--tRNA ligase type 1 subfamily. As to quaternary structure, monomer.

The protein localises to the cytoplasm. The enzyme catalyses tRNA(Glu) + L-glutamate + ATP = L-glutamyl-tRNA(Glu) + AMP + diphosphate. In terms of biological role, catalyzes the attachment of glutamate to tRNA(Glu) in a two-step reaction: glutamate is first activated by ATP to form Glu-AMP and then transferred to the acceptor end of tRNA(Glu). The protein is Glutamate--tRNA ligase 1 of Orientia tsutsugamushi (strain Boryong) (Rickettsia tsutsugamushi).